We begin with the raw amino-acid sequence, 265 residues long: Probable enoyl-CoA hydratase 1, peroxisomal (265 aa).

N-acetylmethionine is present on M1. Substrate-binding positions include S68–L72 and A112. A Microbody targeting signal motif is present at residues S263 to L265.

Belongs to the enoyl-CoA hydratase/isomerase family.

The protein localises to the peroxisome. The enzyme catalyses a (3S)-3-hydroxyacyl-CoA = a (2E)-enoyl-CoA + H2O. It catalyses the reaction a 4-saturated-(3S)-3-hydroxyacyl-CoA = a (3E)-enoyl-CoA + H2O. Its pathway is lipid metabolism; fatty acid beta-oxidation. Its function is as follows. Straight-chain enoyl-CoA thioesters from C4 up to at least C16 are processed, although with decreasing catalytic rate. The sequence is that of Probable enoyl-CoA hydratase 1, peroxisomal from Arabidopsis thaliana (Mouse-ear cress).